The following is a 307-amino-acid chain: MGTVLSLSPSYRKATLFEDGAATVGHYTAVQNSKNAKDKNLKRHSIISVLPWKRIVAVSAKKKNSKKVQPNSSYQNNITHLNNENLKKSLSCANLSTFAQPPPAQPPAPPASQLSGSQTGGSSSVKKAPHPAVTSAGTPKRVIVQASTSELLRCLGEFLCRRCYRLKHLSPTDPVLWLRSVDRSLLLQGWQDQGFITPANVVFLYMLCRDVISSEVGSDHELQAVLLTCLYLSYSYMGNEISYPLKPFLVESCKEAFWDRCLSVINLMSSKMLQINADPHYFTQVFSDLKNESGQEDKKRLLLGLDR.

Residue Gly2 is the site of N-myristoyl glycine attachment. Ser8 is subject to Phosphoserine; by CDK5. The interval Thr97–Ala136 is disordered. Residues Gln100–Pro110 show a composition bias toward pro residues. Low complexity predominate over residues Ala111–Ser124. Phosphothreonine; by CDK5 is present on Thr138.

It belongs to the cyclin-dependent kinase 5 activator family. As to quaternary structure, heterodimer composed of a catalytic subunit CDK5 and a regulatory subunit CDK5R1 (p25) and macromolecular complex composed of at least CDK5, CDK5R1 (p35) and CDK5RAP1 or CDK5RAP2 or CDK5RAP3. Only the heterodimer shows kinase activity. Interacts with EPHA4 and NGEF; may mediate the activation of NGEF by EPHA4. Interacts with RASGRF2. The complex p35/CDK5 interacts with CLOCK. The p35 form is proteolytically cleaved by calpain, giving rise to the p25 form. P35 has a 5 to 10 fold shorter half-life compared to p25. The conversion results in deregulation of the CDK5 kinase: p25/CDK5 kinase displays an increased and altered tau phosphorylation in comparison to the p35/CDK5 kinase in vivo. Post-translationally, myristoylated. A proper myristoylation signal is essential for the proper distribution of p35. In terms of processing, ubiquitinated, leading to its degradation: degradation of p35 by proteasome results in down-regulation of CDK5 activity. During this process, CDK5 phosphorylates p35 and induces its ubiquitination and subsequent degradation. Ubiquitinated by the CRL2(FEM1B) complex, which recognizes the -Gly-Leu-Asp-Arg C-degron at the C-terminus, leading to its degradation. Phosphorylation at Ser-8 and Thr-138 by CDK5 prevents calpain-mediated proteolysis. Brain and neuron specific.

The protein localises to the cell membrane. Its subcellular location is the cell projection. The protein resides in the neuron projection. It is found in the nucleus. It localises to the cytoplasm. The protein localises to the perinuclear region. Its subcellular location is the perikaryon. Functionally, p35 is a neuron specific activator of CDK5. The complex p35/CDK5 is required for neurite outgrowth and cortical lamination. Involved in dendritic spine morphogenesis by mediating the EFNA1-EPHA4 signaling. Activator of TPKII. The complex p35/CDK5 participates in the regulation of the circadian clock by modulating the function of CLOCK protein: phosphorylates CLOCK at 'Thr-451' and 'Thr-461' and regulates the transcriptional activity of the CLOCK-BMAL1 heterodimer in association with altered stability and subcellular distribution. The protein is Cyclin-dependent kinase 5 activator 1 (CDK5R1) of Homo sapiens (Human).